The primary structure comprises 257 residues: 7-carboxy-7-deazaguanine synthase (257 aa).

Residues 29–31 (LQG) and arginine 44 each bind substrate. Residues 35-253 (LAGTPSVFVR…PRLHVALWND (219 aa)) form the Radical SAM core domain. The [4Fe-4S] cluster site is built by cysteine 48, cysteine 52, and cysteine 55. Serine 57 contributes to the Mg(2+) binding site. Threonine 90 is a binding site for substrate. An S-adenosyl-L-methionine-binding site is contributed by glycine 92. The tract at residues 133-153 (VSPKLASSTPTAETDPKGDGE) is disordered.

It belongs to the radical SAM superfamily. 7-carboxy-7-deazaguanine synthase family. Homodimer. Requires [4Fe-4S] cluster as cofactor. It depends on S-adenosyl-L-methionine as a cofactor. Mg(2+) serves as cofactor.

It catalyses the reaction 6-carboxy-5,6,7,8-tetrahydropterin + H(+) = 7-carboxy-7-deazaguanine + NH4(+). The protein operates within purine metabolism; 7-cyano-7-deazaguanine biosynthesis. In terms of biological role, catalyzes the complex heterocyclic radical-mediated conversion of 6-carboxy-5,6,7,8-tetrahydropterin (CPH4) to 7-carboxy-7-deazaguanine (CDG), a step common to the biosynthetic pathways of all 7-deazapurine-containing compounds. The sequence is that of 7-carboxy-7-deazaguanine synthase from Halobacterium salinarum (strain ATCC 29341 / DSM 671 / R1).